Here is a 215-residue protein sequence, read N- to C-terminus: Protein-L-isoaspartate O-methyltransferase (215 aa).

Residue serine 62 is part of the active site.

It belongs to the methyltransferase superfamily. L-isoaspartyl/D-aspartyl protein methyltransferase family.

It is found in the cytoplasm. It carries out the reaction [protein]-L-isoaspartate + S-adenosyl-L-methionine = [protein]-L-isoaspartate alpha-methyl ester + S-adenosyl-L-homocysteine. Functionally, catalyzes the methyl esterification of L-isoaspartyl residues in peptides and proteins that result from spontaneous decomposition of normal L-aspartyl and L-asparaginyl residues. It plays a role in the repair and/or degradation of damaged proteins. In Ruegeria pomeroyi (strain ATCC 700808 / DSM 15171 / DSS-3) (Silicibacter pomeroyi), this protein is Protein-L-isoaspartate O-methyltransferase.